A 294-amino-acid polypeptide reads, in one-letter code: Shikimate dehydrogenase (NADP(+)) (294 aa).

Residues 25–27 and T72 contribute to the shikimate site; that span reads SAS. K76 acts as the Proton acceptor in catalysis. Shikimate-binding residues include N97 and D112. NADP(+) contacts are provided by residues 136 to 140 and T234; that span reads GAGGA. A shikimate-binding site is contributed by Y236. G257 contacts NADP(+).

The protein belongs to the shikimate dehydrogenase family. As to quaternary structure, homodimer.

It carries out the reaction shikimate + NADP(+) = 3-dehydroshikimate + NADPH + H(+). Its pathway is metabolic intermediate biosynthesis; chorismate biosynthesis; chorismate from D-erythrose 4-phosphate and phosphoenolpyruvate: step 4/7. Its function is as follows. Involved in the biosynthesis of the chorismate, which leads to the biosynthesis of aromatic amino acids. Catalyzes the reversible NADPH linked reduction of 3-dehydroshikimate (DHSA) to yield shikimate (SA). The sequence is that of Shikimate dehydrogenase (NADP(+)) from Symbiobacterium thermophilum (strain DSM 24528 / JCM 14929 / IAM 14863 / T).